The sequence spans 818 residues: BDNF/NT-3 growth factors receptor (818 aa).

A signal peptide spans 1–31; it reads MVSWRRRPGPGLARLWGLCCLVLGCWRGALG. Disulfide bonds link Cys-32–Cys-38 and Cys-36–Cys-45. Topologically, residues 32 to 426 are extracellular; the sequence is CPASCRCSSW…DVSNKENEDS (395 aa). Residue Asn-66 is glycosylated (N-linked (GlcNAc...) asparagine). One copy of the LRR 1 repeat lies at 71-92; sequence YIANQRKLESINDNEVGFYVGL. The N-linked (GlcNAc...) asparagine glycan is linked to Asn-94. An LRR 2 repeat occupies 95-116; sequence LTVVDSGLRFVSRQAFVKNINL. Residue Asn-120 is glycosylated (N-linked (GlcNAc...) asparagine). 2 disulfide bridges follow: Cys-151/Cys-175 and Cys-153/Cys-193. One can recognise an Ig-like C2-type 1 domain in the interval 196–281; that stretch reads PSANLSNYNI…GEVQTSAELT (86 aa). 7 N-linked (GlcNAc...) asparagine glycosylation sites follow: Asn-199, Asn-204, Asn-226, Asn-253, Asn-287, Asn-324, and Asn-337. Cys-217 and Cys-265 are disulfide-bonded. The 70-residue stretch at 295–364 folds into the Ig-like C2-type 2 domain; that stretch reads TPDHHWCIPF…NGAYTLLAKN (70 aa). Cys-301 and Cys-344 form a disulfide bridge. Residues 384–394 form a provides specificity for BDNF as ligand versus NTF3 and NTF4 region; it reads GSGPIVDPDVY. Positions 400-418 are enriched in polar residues; sequence PNDLGDTTNNSNQITSPDV. The segment at 400 to 420 is disordered; sequence PNDLGDTTNNSNQITSPDVSN. N-linked (GlcNAc...) asparagine glycosylation occurs at Asn-408. A helical transmembrane segment spans residues 427-450; the sequence is ITVYVVVGIAALVCTGLVIMLIIL. Topologically, residues 451 to 818 are cytoplasmic; the sequence is KFGRHSKFGM…ASPVYLDILG (368 aa). The segment at 469-494 is disordered; it reads NDDDSASPLHHISNGSNTPSSSEGGP. The span at 481–491 shows a compositional bias: polar residues; that stretch reads SNGSNTPSSSE. Residue Tyr-512 is modified to Phosphotyrosine; by autocatalysis. In terms of domain architecture, Protein kinase spans 534 to 803; the sequence is IVLKRELGEG…LNIKEIHSLL (270 aa). Residues 540-548 and Lys-568 each bind ATP; that span reads LGEGAFGKV. Asp-672 acts as the Proton acceptor in catalysis. Phosphotyrosine; by autocatalysis occurs at positions 698, 702, 703, and 813.

The protein belongs to the protein kinase superfamily. Tyr protein kinase family. Insulin receptor subfamily. Exists in a dynamic equilibrium between monomeric (low affinity) and dimeric (high affinity) structures. Interacts (phosphorylated upon activation by BDNF) with SHC1; mediates SHC1 phosphorylation and activation. Interacts (phosphorylated upon activation by BDNF) with PLCG1 and/or PLCG2; mediates PLCG1 phosphorylation and activation. Interacts with SH2B1 and SH2B2. Interacts with NGFR; may regulate the ligand specificity of the receptor. Interacts with SORCS2; this interaction is important for normal targeting to post-synaptic densities in response to high-frequency stimulation. Interacts (phosphorylated upon ligand-binding) with SH2D1A; regulates NTRK2. Interacts with SQSTM1 and KIDINS220. Interacts (phosphorylated upon ligand-binding) with FRS2; activates the MAPK signaling pathway. Interacts with APPL1. Interacts with MAPK8IP3/JIP3 and KLC1; interaction with KLC1 is mediated by MAPK8IP3/JIP3. In terms of processing, ligand-mediated auto-phosphorylation. In terms of tissue distribution, detected in embryonic brain and orsal root ganglia.

The protein localises to the cell membrane. It localises to the endosome membrane. It is found in the cell projection. Its subcellular location is the axon. The protein resides in the dendrite. The protein localises to the cytoplasm. It localises to the perinuclear region. It is found in the postsynaptic density. The catalysed reaction is L-tyrosyl-[protein] + ATP = O-phospho-L-tyrosyl-[protein] + ADP + H(+). Its activity is regulated as follows. The neuronal activity and the influx of calcium positively regulate the kinase activity and the internalization of the receptor which are both important for active signaling. Regulated by NGFR that may control the internalization of the receptor. NGFR may also stimulate the activation by BDNF compared to NTF3 and NTF4. The formation of active receptors dimers able to fully transduce the ligand-mediated signal, may be negatively regulated by the formation of inactive heterodimers with the non-catalytic isoforms. In terms of biological role, receptor tyrosine kinase involved in the development and the maturation of the central and the peripheral nervous systems through regulation of neuron survival, proliferation, migration, differentiation, and synapse formation and plasticity. Receptor for BDNF/brain-derived neurotrophic factor and NTF4/neurotrophin-4. Alternatively can also bind NTF3/neurotrophin-3 which is less efficient in activating the receptor but regulates neuron survival through NTRK2. Upon ligand-binding, undergoes homodimerization, autophosphorylation and activation. Recruits, phosphorylates and/or activates several downstream effectors including SHC1, FRS2, SH2B1, SH2B2 and PLCG1 that regulate distinct overlapping signaling cascades. Through SHC1, FRS2, SH2B1, SH2B2 activates the GRB2-Ras-MAPK cascade that regulates for instance neuronal differentiation including neurite outgrowth. Through the same effectors controls the Ras-PI3 kinase-AKT1 signaling cascade that mainly regulates growth and survival. Through PLCG1 and the downstream protein kinase C-regulated pathways controls synaptic plasticity. Thereby, plays a role in learning and memory by regulating both short term synaptic function and long-term potentiation. PLCG1 also leads to NF-Kappa-B activation and the transcription of genes involved in cell survival. Hence, it is able to suppress anoikis, the apoptosis resulting from loss of cell-matrix interactions. May also play a role in neutrophin-dependent calcium signaling in glial cells and mediate communication between neurons and glia. In Gallus gallus (Chicken), this protein is BDNF/NT-3 growth factors receptor (NTRK2).